The sequence spans 318 residues: Pyrimidine-specific ribonucleoside hydrolase RihA (318 aa).

The active site involves His240.

This sequence belongs to the IUNH family. RihA subfamily.

Hydrolyzes cytidine or uridine to ribose and cytosine or uracil, respectively. The chain is Pyrimidine-specific ribonucleoside hydrolase RihA from Shewanella sp. (strain MR-7).